The primary structure comprises 119 residues: Protein TusC (119 aa).

It belongs to the DsrF/TusC family. As to quaternary structure, heterohexamer, formed by a dimer of trimers. The hexameric TusBCD complex contains 2 copies each of TusB, TusC and TusD. The TusBCD complex interacts with TusE.

The protein localises to the cytoplasm. In terms of biological role, part of a sulfur-relay system required for 2-thiolation of 5-methylaminomethyl-2-thiouridine (mnm(5)s(2)U) at tRNA wobble positions. This Buchnera aphidicola subsp. Baizongia pistaciae (strain Bp) protein is Protein TusC.